The following is a 432-amino-acid chain: Alpha-enolase (432 aa).

Serine 40 is a binding site for Mg(2+). Residues histidine 158 and glutamate 167 each contribute to the substrate site. The active-site Proton donor is glutamate 210. Residues aspartate 245, glutamate 293, and aspartate 318 each coordinate Mg(2+). 2 residues coordinate substrate: glutamate 293 and aspartate 318. The Proton acceptor role is filled by lysine 343. Substrate-binding positions include 370–373 (SHRS) and lysine 394.

The protein belongs to the enolase family. As to quaternary structure, dimer. The cofactor is Mg(2+).

Its subcellular location is the cytoplasm. The enzyme catalyses (2R)-2-phosphoglycerate = phosphoenolpyruvate + H2O. It functions in the pathway carbohydrate degradation; glycolysis; pyruvate from D-glyceraldehyde 3-phosphate: step 4/5. Its function is as follows. Multifunctional enzyme that, as well as its role in glycolysis, plays a part in various processes such as growth control, hypoxia tolerance and allergic responses. The protein is Alpha-enolase of Thunnus albacares (Yellowfin tuna).